The primary structure comprises 612 residues: Dihydroxy-acid dehydratase (612 aa).

A Mg(2+)-binding site is contributed by Asp-81. A [2Fe-2S] cluster-binding site is contributed by Cys-122. Mg(2+)-binding residues include Asp-123 and Lys-124. Lys-124 is subject to N6-carboxylysine. A [2Fe-2S] cluster-binding site is contributed by Cys-195. Position 491 (Glu-491) interacts with Mg(2+). Ser-517 (proton acceptor) is an active-site residue.

This sequence belongs to the IlvD/Edd family. Homodimer. It depends on [2Fe-2S] cluster as a cofactor. Mg(2+) is required as a cofactor.

The catalysed reaction is (2R)-2,3-dihydroxy-3-methylbutanoate = 3-methyl-2-oxobutanoate + H2O. The enzyme catalyses (2R,3R)-2,3-dihydroxy-3-methylpentanoate = (S)-3-methyl-2-oxopentanoate + H2O. Its pathway is amino-acid biosynthesis; L-isoleucine biosynthesis; L-isoleucine from 2-oxobutanoate: step 3/4. The protein operates within amino-acid biosynthesis; L-valine biosynthesis; L-valine from pyruvate: step 3/4. Functionally, functions in the biosynthesis of branched-chain amino acids. Catalyzes the dehydration of (2R,3R)-2,3-dihydroxy-3-methylpentanoate (2,3-dihydroxy-3-methylvalerate) into 2-oxo-3-methylpentanoate (2-oxo-3-methylvalerate) and of (2R)-2,3-dihydroxy-3-methylbutanoate (2,3-dihydroxyisovalerate) into 2-oxo-3-methylbutanoate (2-oxoisovalerate), the penultimate precursor to L-isoleucine and L-valine, respectively. This is Dihydroxy-acid dehydratase from Rhizobium leguminosarum bv. trifolii (strain WSM2304).